A 239-amino-acid chain; its full sequence is 1-(5-phosphoribosyl)-5-[(5-phosphoribosylamino)methylideneamino] imidazole-4-carboxamide isomerase (239 aa).

The Proton acceptor role is filled by Asp-12. The active-site Proton donor is the Asp-132.

The protein belongs to the HisA/HisF family.

Its subcellular location is the cytoplasm. It catalyses the reaction 1-(5-phospho-beta-D-ribosyl)-5-[(5-phospho-beta-D-ribosylamino)methylideneamino]imidazole-4-carboxamide = 5-[(5-phospho-1-deoxy-D-ribulos-1-ylimino)methylamino]-1-(5-phospho-beta-D-ribosyl)imidazole-4-carboxamide. Its pathway is amino-acid biosynthesis; L-histidine biosynthesis; L-histidine from 5-phospho-alpha-D-ribose 1-diphosphate: step 4/9. The protein is 1-(5-phosphoribosyl)-5-[(5-phosphoribosylamino)methylideneamino] imidazole-4-carboxamide isomerase of Natronomonas pharaonis (strain ATCC 35678 / DSM 2160 / CIP 103997 / JCM 8858 / NBRC 14720 / NCIMB 2260 / Gabara) (Halobacterium pharaonis).